The primary structure comprises 62 residues: DNA-directed RNA polymerase subunit Rpo10 (62 aa).

Residues cysteine 6, cysteine 9, cysteine 43, and cysteine 44 each coordinate Zn(2+).

The protein belongs to the archaeal Rpo10/eukaryotic RPB10 RNA polymerase subunit family. As to quaternary structure, part of the RNA polymerase complex. The cofactor is Zn(2+).

The protein localises to the cytoplasm. It carries out the reaction RNA(n) + a ribonucleoside 5'-triphosphate = RNA(n+1) + diphosphate. Its function is as follows. DNA-dependent RNA polymerase (RNAP) catalyzes the transcription of DNA into RNA using the four ribonucleoside triphosphates as substrates. The sequence is that of DNA-directed RNA polymerase subunit Rpo10 from Methanosarcina barkeri (strain Fusaro / DSM 804).